Here is a 595-residue protein sequence, read N- to C-terminus: Proline--tRNA ligase (595 aa).

It belongs to the class-II aminoacyl-tRNA synthetase family. ProS type 1 subfamily. In terms of assembly, homodimer.

It localises to the cytoplasm. The enzyme catalyses tRNA(Pro) + L-proline + ATP = L-prolyl-tRNA(Pro) + AMP + diphosphate. In terms of biological role, catalyzes the attachment of proline to tRNA(Pro) in a two-step reaction: proline is first activated by ATP to form Pro-AMP and then transferred to the acceptor end of tRNA(Pro). As ProRS can inadvertently accommodate and process non-cognate amino acids such as alanine and cysteine, to avoid such errors it has two additional distinct editing activities against alanine. One activity is designated as 'pretransfer' editing and involves the tRNA(Pro)-independent hydrolysis of activated Ala-AMP. The other activity is designated 'posttransfer' editing and involves deacylation of mischarged Ala-tRNA(Pro). The misacylated Cys-tRNA(Pro) is not edited by ProRS. This Treponema denticola (strain ATCC 35405 / DSM 14222 / CIP 103919 / JCM 8153 / KCTC 15104) protein is Proline--tRNA ligase.